Reading from the N-terminus, the 72-residue chain is Translation initiation factor IF-1 (72 aa).

The S1-like domain maps to 1–72 (MAKEESIEVE…SKGRITYRYK (72 aa)).

This sequence belongs to the IF-1 family. Component of the 30S ribosomal translation pre-initiation complex which assembles on the 30S ribosome in the order IF-2 and IF-3, IF-1 and N-formylmethionyl-tRNA(fMet); mRNA recruitment can occur at any time during PIC assembly.

The protein resides in the cytoplasm. Functionally, one of the essential components for the initiation of protein synthesis. Stabilizes the binding of IF-2 and IF-3 on the 30S subunit to which N-formylmethionyl-tRNA(fMet) subsequently binds. Helps modulate mRNA selection, yielding the 30S pre-initiation complex (PIC). Upon addition of the 50S ribosomal subunit IF-1, IF-2 and IF-3 are released leaving the mature 70S translation initiation complex. In Chlorobaculum tepidum (strain ATCC 49652 / DSM 12025 / NBRC 103806 / TLS) (Chlorobium tepidum), this protein is Translation initiation factor IF-1.